Here is a 504-residue protein sequence, read N- to C-terminus: Glucosaminyl-phosphatidylinositol-acyltransferase PIGW (504 aa).

The Lumenal portion of the chain corresponds to 1 to 21 (MSEKQMKEAFVSNLNGTTVLE). Asn15 is a glycosylation site (N-linked (GlcNAc...) asparagine). The helical transmembrane segment at 22-42 (ITQGLCFPAFCILCRGFLIIF) threads the bilayer. Residues 43–56 (SQYLCSFSPTWKTR) are Cytoplasmic-facing. Residues 57 to 75 (FLTDFVVLIVPMVATLTIW) form a helical membrane-spanning segment. At 76 to 81 (ASFILL) the chain is on the lumenal side. Residues 82–98 (ELLGVIIFGAGLLYQIY) form a helical membrane-spanning segment. Topologically, residues 99–131 (RRRTCYARLPFLKILEKFLNISLESEYNPAISC) are cytoplasmic. A helical transmembrane segment spans residues 132-152 (FRVITSAFTAIAILAVDFPLF). Residues 153 to 162 (PRRFAKTELY) lie on the Lumenal side of the membrane. Residues 163-183 (GTGAMDFGVGGFVFGSAMVCL) form a helical membrane-spanning segment. At 184–202 (EVRRRKYMEGSKLHYFTNS) the chain is on the cytoplasmic side. Residues 203 to 223 (LYSVWPLVFLGIGRLAIIKSI) traverse the membrane as a helical segment. At 224 to 237 (GYQEHLTEYGVHWN) the chain is on the lumenal side. A helical transmembrane segment spans residues 238-258 (FFFTIIVVKLITPLLLIIFPL). At 259–260 (NK) the chain is on the cytoplasmic side. A helical transmembrane segment spans residues 261-281 (SWIIALGITVLYQLALDFTSL). The Lumenal portion of the chain corresponds to 282–305 (KRLILYGTDGSGTRVGLLNANREG). The chain crosses the membrane as a helical span at residues 306–326 (IISTLGYVAIHMAGVQTGLYM). The Cytoplasmic segment spans residues 327–338 (HKNRSHIKDLIK). A helical transmembrane segment spans residues 339-359 (VACFLLLAAISLFISLYVVQV). Over 360–370 (NVEAVSRRMAN) the chain is Lumenal. The chain crosses the membrane as a helical span at residues 371–391 (LAFCIWIVASSLILLSSLLLG). At 392 to 448 (DIILSFAKFLIKGALVPCSWKLIQSPVTNKKHSESLVPEAERMEPSLCLITALNRKQ) the chain is on the cytoplasmic side. Residue Ser416 is modified to Phosphoserine. A helical transmembrane segment spans residues 449–469 (LIFFLLSNITTGLINLMVDTL). Over 470–473 (HSST) the chain is Lumenal. A helical membrane pass occupies residues 474–494 (LWALFVVNLYMFSNCLIVYVL). Residues 495–504 (YLQDKTVQFW) lie on the Cytoplasmic side of the membrane.

It belongs to the PIGW family.

It is found in the endoplasmic reticulum membrane. It functions in the pathway glycolipid biosynthesis; glycosylphosphatidylinositol-anchor biosynthesis. Functionally, acyltransferase that catalyzes the acyl transfer from an acyl-CoA at the 2-OH position of the inositol ring of glucosaminyl phosphatidylinositol (GlcN-PI) to generate glucosaminyl acyl phosphatidylinositol (GlcN-(acyl)PI) and participates in the fourth step of GPI-anchor biosynthesis. Required for the transport of GPI-anchored proteins to the plasma membrane. Acetylation during GPI-anchor biosynthesis is not essential for the subsequent mannosylation and is usually removed soon after the attachment of GPIs to proteins. The polypeptide is Glucosaminyl-phosphatidylinositol-acyltransferase PIGW (Homo sapiens (Human)).